The sequence spans 375 residues: Growth/differentiation factor 8 (375 aa).

Residues M1–L23 form the signal peptide. The propeptide occupies D24–R266. An N-linked (GlcNAc...) asparagine glycan is attached at N71. 4 disulfide bridges follow: C272-C282, C281-C340, C309-C372, and C313-C374.

Belongs to the TGF-beta family. As to quaternary structure, homodimer; disulfide-linked.

The protein localises to the secreted. Its function is as follows. Acts specifically as a negative regulator of skeletal muscle growth. In Excalfactoria chinensis (Blue-breasted quail), this protein is Growth/differentiation factor 8 (MSTN).